The following is a 417-amino-acid chain: UDP-N-acetylglucosamine 1-carboxyvinyltransferase (417 aa).

Residue 22–23 (KN) coordinates phosphoenolpyruvate. Arginine 92 provides a ligand contact to UDP-N-acetyl-alpha-D-glucosamine. Cysteine 116 acts as the Proton donor in catalysis. Cysteine 116 is modified (2-(S-cysteinyl)pyruvic acid O-phosphothioketal). Positions 304 and 326 each coordinate UDP-N-acetyl-alpha-D-glucosamine.

The protein belongs to the EPSP synthase family. MurA subfamily.

Its subcellular location is the cytoplasm. It carries out the reaction phosphoenolpyruvate + UDP-N-acetyl-alpha-D-glucosamine = UDP-N-acetyl-3-O-(1-carboxyvinyl)-alpha-D-glucosamine + phosphate. It participates in cell wall biogenesis; peptidoglycan biosynthesis. Its function is as follows. Cell wall formation. Adds enolpyruvyl to UDP-N-acetylglucosamine. This chain is UDP-N-acetylglucosamine 1-carboxyvinyltransferase, found in Geotalea uraniireducens (strain Rf4) (Geobacter uraniireducens).